The sequence spans 330 residues: Anthranilate phosphoribosyltransferase (330 aa).

5-phospho-alpha-D-ribose 1-diphosphate-binding positions include glycine 79, 82–83 (GD), threonine 87, 89–92 (NIST), 107–115 (KHGNYGVSS), and serine 119. Glycine 79 lines the anthranilate pocket. Position 91 (serine 91) interacts with Mg(2+). An anthranilate-binding site is contributed by asparagine 110. An anthranilate-binding site is contributed by arginine 165. 2 residues coordinate Mg(2+): aspartate 223 and glutamate 224.

It belongs to the anthranilate phosphoribosyltransferase family. Homodimer. The cofactor is Mg(2+).

It carries out the reaction N-(5-phospho-beta-D-ribosyl)anthranilate + diphosphate = 5-phospho-alpha-D-ribose 1-diphosphate + anthranilate. The protein operates within amino-acid biosynthesis; L-tryptophan biosynthesis; L-tryptophan from chorismate: step 2/5. Functionally, catalyzes the transfer of the phosphoribosyl group of 5-phosphorylribose-1-pyrophosphate (PRPP) to anthranilate to yield N-(5'-phosphoribosyl)-anthranilate (PRA). This chain is Anthranilate phosphoribosyltransferase, found in Flavobacterium johnsoniae (strain ATCC 17061 / DSM 2064 / JCM 8514 / BCRC 14874 / CCUG 350202 / NBRC 14942 / NCIMB 11054 / UW101) (Cytophaga johnsonae).